The following is a 66-amino-acid chain: Toxin NaTx-4 (66 aa).

The region spanning K1–S64 is the LCN-type CS-alpha/beta domain. 4 disulfide bridges follow: C12/C63, C16/C39, C25/C44, and C29/C46.

This sequence belongs to the long (4 C-C) scorpion toxin superfamily. Sodium channel inhibitor family. As to expression, expressed by the venom gland.

Its subcellular location is the secreted. In terms of biological role, probable sodium channel inhibitor. This Centruroides sculpturatus (Arizona bark scorpion) protein is Toxin NaTx-4.